Reading from the N-terminus, the 195-residue chain is Ethylene-responsive transcription factor ERF018 (195 aa).

Basic and acidic residues predominate over residues 1–13 (MVKQAMKEEEKKR). The interval 1–22 (MVKQAMKEEEKKRNTAMQSKYK) is disordered. Residues 20-77 (KYKGVRKRKWGKWVSEIRLPHSRERIWLGSYDTPEKAARAFDAAQFCLRGGDANFNFP) constitute a DNA-binding region (AP2/ERF).

This sequence belongs to the AP2/ERF transcription factor family. ERF subfamily.

It localises to the nucleus. Functionally, probably acts as a transcriptional activator. Binds to the GCC-box pathogenesis-related promoter element. May be involved in the regulation of gene expression by stress factors and by components of stress signal transduction pathways. The polypeptide is Ethylene-responsive transcription factor ERF018 (ERF018) (Arabidopsis thaliana (Mouse-ear cress)).